Reading from the N-terminus, the 727-residue chain is Putative ATP-dependent RNA helicase DHX15 (727 aa).

The tract at residues 1–41 (MSKRKHESSDSNKKAMKKQQNKIEEEEEEITNTTTTTTTTN) is disordered. Residues 31-41 (TNTTTTTTTTN) are compositionally biased toward low complexity. A Helicase ATP-binding domain is found at 87–251 (IKVIKENQVV…FENAPLIKVP (165 aa)). 100–107 (GETGSGKT) is an ATP binding site. The short motif at 198–201 (DEAH) is the DEAH box element. The Helicase C-terminal domain occupies 273–445 (AVRTVIDIHT…SVVLQLLKLG (173 aa)).

Belongs to the DEAD box helicase family. DEAH subfamily. DDX15/PRP43 sub-subfamily.

Its subcellular location is the nucleus. The catalysed reaction is ATP + H2O = ADP + phosphate + H(+). Its function is as follows. Pre-mRNA processing factor involved in disassembly of spliceosomes after the release of mature mRNA. This chain is Putative ATP-dependent RNA helicase DHX15 (dhx15), found in Dictyostelium discoideum (Social amoeba).